Consider the following 99-residue polypeptide: uncharacterized protein (99 aa).

The helical transmembrane segment at 74–90 threads the bilayer; the sequence is FLSLPLGHSYLFLFCFW.

Its subcellular location is the membrane. This is an uncharacterized protein from Saccharomyces cerevisiae (strain ATCC 204508 / S288c) (Baker's yeast).